A 373-amino-acid polypeptide reads, in one-letter code: MRKELLKKVKRVVVKIGSGVLTGENGGVDPRFLDGLAAQVAELSGQGTEVVIVSSGAVAAGRQALGLPDRPRTLPQKQAAAAVGQSRLMRAYEEAFSSYDLKVAQILLTRDDLANRRRFQNARGTLDTLLACGIIPVINENDTVVVDELKFGDNDNLSALVTNLVEAQLLLIMTDIDGLYTADPRTDPNATLIHQVGAVTRELERGAGGSGTSVGTGGMATKLAAAKKVVKSGVAAIIFAGRGERTLSRVMKGELLGTLFLPAGESLNRRKHWIAFTIKPAGSIVVDAGARDVLSRHGRSLLPSGIAQVEGRFDRGACVRVLDPEGVEFARGITDYSSQEVEKIRGHQSSEIEGILGFRYGDDVIHRDNLVLL.

Residue K15 coordinates ATP. The substrate site is built by S55, D142, and N154. Residues T174–D175 and T216–K222 each bind ATP. In terms of domain architecture, PUA spans A281–R359.

The protein belongs to the glutamate 5-kinase family.

It is found in the cytoplasm. It catalyses the reaction L-glutamate + ATP = L-glutamyl 5-phosphate + ADP. It functions in the pathway amino-acid biosynthesis; L-proline biosynthesis; L-glutamate 5-semialdehyde from L-glutamate: step 1/2. Functionally, catalyzes the transfer of a phosphate group to glutamate to form L-glutamate 5-phosphate. In Citrifermentans bemidjiense (strain ATCC BAA-1014 / DSM 16622 / JCM 12645 / Bem) (Geobacter bemidjiensis), this protein is Glutamate 5-kinase.